Reading from the N-terminus, the 1052-residue chain is Multidrug resistance protein MdtB (1052 aa).

11 helical membrane passes run 15–37, 345–362, 367–389, 396–418, 438–460, 472–494, 535–557, 867–889, 909–931, 968–990, and 1000–1022; these read LFIL…GIIG, FELL…YLFL, ATII…MYFL, LTLM…VIEN, GEIG…PLLF, FAVT…TPMM, HPWL…YLLI, LWLI…ESFI, LMLT…IGIV, ILMT…GVGA, and MVGG…YLLF. Residues 1032 to 1052 are disordered; the sequence is KNRHRDEDIDSSELLNGQEPQ.

It belongs to the resistance-nodulation-cell division (RND) (TC 2.A.6) family. MdtB subfamily. Part of a tripartite efflux system composed of MdtA, MdtB and MdtC. MdtB forms a heteromultimer with MdtC.

It localises to the cell inner membrane. This chain is Multidrug resistance protein MdtB, found in Yersinia pestis.